Consider the following 275-residue polypeptide: Large ribosomal subunit protein uL2 (275 aa).

The disordered stretch occupies residues 222–275; the sequence is GVAMNPVDHPMGGGEGRSSGGRHPCSPWGMPTKGYKTRKNKTTDKFIVRKRNKR.

The protein belongs to the universal ribosomal protein uL2 family. As to quaternary structure, part of the 50S ribosomal subunit. Forms a bridge to the 30S subunit in the 70S ribosome.

One of the primary rRNA binding proteins. Required for association of the 30S and 50S subunits to form the 70S ribosome, for tRNA binding and peptide bond formation. It has been suggested to have peptidyltransferase activity; this is somewhat controversial. Makes several contacts with the 16S rRNA in the 70S ribosome. The sequence is that of Large ribosomal subunit protein uL2 from Desulfatibacillum aliphaticivorans.